The sequence spans 120 residues: Large ribosomal subunit protein bL19 (120 aa).

This sequence belongs to the bacterial ribosomal protein bL19 family.

Functionally, this protein is located at the 30S-50S ribosomal subunit interface and may play a role in the structure and function of the aminoacyl-tRNA binding site. The protein is Large ribosomal subunit protein bL19 of Thermosynechococcus vestitus (strain NIES-2133 / IAM M-273 / BP-1).